The following is a 1080-amino-acid chain: Carbamoyl phosphate synthase large chain (1080 aa).

The interval 1–403 (MPKRTDLRTI…SLQKAVRGLE (403 aa)) is carboxyphosphate synthetic domain. The ATP site is built by Arg-129, Arg-169, Gly-175, Gly-176, Glu-208, Val-210, Glu-215, Gly-241, Val-242, His-243, Gln-285, and Glu-299. An ATP-grasp 1 domain is found at 133 to 328 (RVAMQEIGLE…IAKIAAKLAV (196 aa)). Mg(2+) is bound by residues Gln-285, Glu-299, and Asn-301. Mn(2+) is bound by residues Gln-285, Glu-299, and Asn-301. An oligomerization domain region spans residues 404 to 554 (TGKVGLEPTG…YSTYEEECEA (151 aa)). A carbamoyl phosphate synthetic domain region spans residues 555-942 (APSDRRKIMI…AFARAQEAGD (388 aa)). Residues 679-876 (QRLVQQLGLR…LAKIAARCMT (198 aa)) enclose the ATP-grasp 2 domain. ATP-binding residues include Arg-715, Arg-754, Leu-756, Glu-761, Gly-787, Val-788, His-789, Ser-790, Gln-830, and Glu-847. Positions 830, 847, and 849 each coordinate Mg(2+). Residues Gln-830, Glu-847, and Asn-849 each coordinate Mn(2+). One can recognise an MGS-like domain in the interval 943 to 1080 (IRAPQPGRAF…LQELHKELQV (138 aa)). The tract at residues 943–1080 (IRAPQPGRAF…LQELHKELQV (138 aa)) is allosteric domain.

It belongs to the CarB family. Composed of two chains; the small (or glutamine) chain promotes the hydrolysis of glutamine to ammonia, which is used by the large (or ammonia) chain to synthesize carbamoyl phosphate. Tetramer of heterodimers (alpha,beta)4. Mg(2+) serves as cofactor. The cofactor is Mn(2+).

It catalyses the reaction hydrogencarbonate + L-glutamine + 2 ATP + H2O = carbamoyl phosphate + L-glutamate + 2 ADP + phosphate + 2 H(+). The catalysed reaction is hydrogencarbonate + NH4(+) + 2 ATP = carbamoyl phosphate + 2 ADP + phosphate + 2 H(+). The protein operates within amino-acid biosynthesis; L-arginine biosynthesis; carbamoyl phosphate from bicarbonate: step 1/1. It participates in pyrimidine metabolism; UMP biosynthesis via de novo pathway; (S)-dihydroorotate from bicarbonate: step 1/3. Functionally, large subunit of the glutamine-dependent carbamoyl phosphate synthetase (CPSase). CPSase catalyzes the formation of carbamoyl phosphate from the ammonia moiety of glutamine, carbonate, and phosphate donated by ATP, constituting the first step of 2 biosynthetic pathways, one leading to arginine and/or urea and the other to pyrimidine nucleotides. The large subunit (synthetase) binds the substrates ammonia (free or transferred from glutamine from the small subunit), hydrogencarbonate and ATP and carries out an ATP-coupled ligase reaction, activating hydrogencarbonate by forming carboxy phosphate which reacts with ammonia to form carbamoyl phosphate. This chain is Carbamoyl phosphate synthase large chain, found in Xylella fastidiosa (strain Temecula1 / ATCC 700964).